Here is a 471-residue protein sequence, read N- to C-terminus: Cytochrome b-c1 complex subunit 1, mitochondrial (471 aa).

The protein belongs to the peptidase M16 family.

Its subcellular location is the mitochondrion matrix. The sequence is that of Cytochrome b-c1 complex subunit 1, mitochondrial (ucr-1) from Caenorhabditis elegans.